Reading from the N-terminus, the 414-residue chain is Putative dipeptidase TRV_05564 (414 aa).

Positions 1–20 are cleaved as a signal peptide; it reads MAALFVSLLALTSLVPVQGA. Zn(2+) contacts are provided by histidine 45, aspartate 47, and glutamate 157. A disulfide bridge links cysteine 96 with cysteine 186. Substrate is bound at residue histidine 184. Histidine 228 and histidine 249 together coordinate Zn(2+). Residues arginine 260 and aspartate 320 each coordinate substrate. N-linked (GlcNAc...) asparagine glycosylation occurs at asparagine 392.

It belongs to the metallo-dependent hydrolases superfamily. Peptidase M19 family. Zn(2+) is required as a cofactor.

The catalysed reaction is an L-aminoacyl-L-amino acid + H2O = 2 an L-alpha-amino acid. Functionally, hydrolyzes a wide range of dipeptides. The protein is Putative dipeptidase TRV_05564 of Trichophyton verrucosum (strain HKI 0517).